The primary structure comprises 139 residues: uncharacterized protein (139 aa).

To M.tuberculosis Rv2798c.

This is an uncharacterized protein from Mycobacterium tuberculosis (strain CDC 1551 / Oshkosh).